Consider the following 301-residue polypeptide: Phosphatidylglycerol--prolipoprotein diacylglyceryl transferase (301 aa).

A run of 4 helical transmembrane segments spans residues 10–30 (IAFS…LAGF), 57–77 (LLFY…MLFY), 92–112 (VWEG…AVAW), and 119–139 (MHMF…LGFG). Arg-140 lines the a 1,2-diacyl-sn-glycero-3-phospho-(1'-sn-glycerol) pocket. The next 3 helical transmembrane spans lie at 202-222 (PSQL…LWLF), 230-250 (YAVS…VEFV), and 264-284 (LTRG…LFWL).

This sequence belongs to the Lgt family.

It is found in the cell inner membrane. The catalysed reaction is L-cysteinyl-[prolipoprotein] + a 1,2-diacyl-sn-glycero-3-phospho-(1'-sn-glycerol) = an S-1,2-diacyl-sn-glyceryl-L-cysteinyl-[prolipoprotein] + sn-glycerol 1-phosphate + H(+). It participates in protein modification; lipoprotein biosynthesis (diacylglyceryl transfer). Its function is as follows. Catalyzes the transfer of the diacylglyceryl group from phosphatidylglycerol to the sulfhydryl group of the N-terminal cysteine of a prolipoprotein, the first step in the formation of mature lipoproteins. This Xylella fastidiosa (strain M23) protein is Phosphatidylglycerol--prolipoprotein diacylglyceryl transferase.